A 333-amino-acid polypeptide reads, in one-letter code: Autoinducer 2 import system permease protein LsrD (333 aa).

The next 10 membrane-spanning stretches (helical) occupy residues 7–27 (YGWE…FGIA), 45–65 (ICIG…GIDI), 70–90 (TIGL…PMAA), 91–111 (AIPL…ALIL), 118–138 (LVIT…LSGI), 162–182 (LFGL…CWLF), 212–232 (TLYL…IVLV), 240–260 (SDLG…GGAN), 261–281 (IYGG…IGYL), and 288–308 (AGVP…IAVV).

It belongs to the binding-protein-dependent transport system permease family. AraH/RbsC subfamily. In terms of assembly, the complex is composed of two ATP-binding proteins (LsrA), two transmembrane proteins (LsrC and LsrD) and a solute-binding protein (LsrB).

It localises to the cell inner membrane. In terms of biological role, part of the ABC transporter complex LsrABCD involved in autoinducer 2 (AI-2) import. Probably responsible for the translocation of the substrate across the membrane. The polypeptide is Autoinducer 2 import system permease protein LsrD (lsrD) (Photorhabdus laumondii subsp. laumondii (strain DSM 15139 / CIP 105565 / TT01) (Photorhabdus luminescens subsp. laumondii)).